Reading from the N-terminus, the 449-residue chain is Ribosomal protein uS12 methylthiotransferase RimO (449 aa).

Residues 7–123 (QKVSMVSLGC…VAEILAEHHA (117 aa)) form the MTTase N-terminal domain. 6 residues coordinate [4Fe-4S] cluster: C16, C52, C86, C161, C165, and C168. Positions 147–377 (SSPGWYAYLK…MKTQARVSFR (231 aa)) constitute a Radical SAM core domain. Positions 380–448 (RAMVGQTEQV…DYDLVAEMIE (69 aa)) constitute a TRAM domain.

Belongs to the methylthiotransferase family. RimO subfamily. [4Fe-4S] cluster serves as cofactor.

Its subcellular location is the cytoplasm. The enzyme catalyses L-aspartate(89)-[ribosomal protein uS12]-hydrogen + (sulfur carrier)-SH + AH2 + 2 S-adenosyl-L-methionine = 3-methylsulfanyl-L-aspartate(89)-[ribosomal protein uS12]-hydrogen + (sulfur carrier)-H + 5'-deoxyadenosine + L-methionine + A + S-adenosyl-L-homocysteine + 2 H(+). Its function is as follows. Catalyzes the methylthiolation of an aspartic acid residue of ribosomal protein uS12. The chain is Ribosomal protein uS12 methylthiotransferase RimO from Trichlorobacter lovleyi (strain ATCC BAA-1151 / DSM 17278 / SZ) (Geobacter lovleyi).